We begin with the raw amino-acid sequence, 379 residues long: Pectin lyase B (379 aa).

A signal peptide spans 1–19; sequence MRLHAPILSLLAAAASTSA. 2 cysteine pairs are disulfide-bonded: C82/C101 and C91/C225. N128 is a glycosylation site (N-linked (GlcNAc...) asparagine). The active site involves R255. A disulfide bridge links C322 with C330.

It belongs to the polysaccharide lyase 1 family.

It localises to the secreted. It carries out the reaction Eliminative cleavage of (1-&gt;4)-alpha-D-galacturonan methyl ester to give oligosaccharides with 4-deoxy-6-O-methyl-alpha-D-galact-4-enuronosyl groups at their non-reducing ends.. In terms of biological role, pectinolytic enzymes consist of four classes of enzymes: pectin lyase, polygalacturonase, pectin methylesterase and rhamnogalacturonase. Among pectinolytic enzymes, pectin lyase is the most important in depolymerization of pectin, since it cleaves internal glycosidic bonds of highly methylated pectins. This chain is Pectin lyase B (pelB), found in Emericella nidulans (strain FGSC A4 / ATCC 38163 / CBS 112.46 / NRRL 194 / M139) (Aspergillus nidulans).